Reading from the N-terminus, the 1421-residue chain is Envelopment polyprotein (1421 aa).

The signal sequence occupies residues 1 to 20 (MEGSYWWLSLLALLAWGANG). Residues 21–479 (ESTSPAETSP…CRMSHRPRTC (459 aa)) lie on the Lumenal side of the membrane. Positions 22–31 (STSPAETSPA) are enriched in low complexity. The tract at residues 22 to 42 (STSPAETSPAPTTPNPPVVNP) is disordered. N-linked (GlcNAc...) asparagine; by host glycans are attached at residues Asn97 and Asn346. A helical transmembrane segment spans residues 480-500 (LALFIWLGAGYGITCIAGYMV). Over 501 to 610 (YYAILALSML…KLGTLLKRLS (110 aa)) the chain is Cytoplasmic. Residues 611-631 (WVTVFLCLFLTAIAPVQGQVT) traverse the membrane as a helical segment. Residues 632–643 (TSPVLPSNQSTE) lie on the Lumenal side of the membrane. N-linked (GlcNAc...) asparagine; by host glycosylation is present at Asn639. Residues 644-664 (CTLLPPPVFLIFSAVLMSKTL) form a helical membrane-spanning segment. Residues 665 to 708 (KRMGPVNKVGAAGHSARRTNSPKNLYKSKQIANTKSGPREPRRR) lie on the Cytoplasmic side of the membrane. The helical transmembrane segment at 709-729 (VVVKALLILTASSALQSIHLA) threads the bilayer. Residues 722–776 (ALQSIHLAQAFDSGSLPEGAWEEEMQLVQGCNQECSLEEDECSCPDGQSMTRKLL) constitute a propeptide that is removed on maturation. Topologically, residues 730–1330 (QAFDSGSLPE…GSFFRNYLGS (601 aa)) are lumenal. 2 disulfide bridges follow: Cys901–Cys1096 and Cys929–Cys934. 2 N-linked (GlcNAc...) asparagine; by host glycosylation sites follow: Asn1081 and Asn1299. The chain crosses the membrane as a helical span at residues 1331 to 1351 (ITLGIVLTLLPVAVVLLFFCY). At 1352–1421 (GDKLFKLCSC…GKGKNYKELV (70 aa)) the chain is on the cytoplasmic side.

This sequence belongs to the nairovirus envelope glycoprotein family. In terms of assembly, heterodimer with glycoprotein C; in prefusion state. Heterodimer with glycoprotein N; in prefusion state. Homotrimeric; in postfusion state. In terms of processing, specific enzymatic cleavage by host MBTPS1/S1P/SKI-1 endopeptidase yield glycoprotein N. Specific enzymatic cleavages by host furin-like protease and MBTPS1/S1P endopeptidase yield GP38. Glycosylated.

The protein resides in the host endoplasmic reticulum membrane. It is found in the virion membrane. Its subcellular location is the host Golgi apparatus membrane. Glycoprotein N and glycoprotein C interact with each other and are present at the surface of the virion. Glycoprotein N probably locks the Gn-Gc complex in a prefusion state. Glycoprotein N and glycoprotein C are able to attach the virion to host cell receptors. This attachment induces virion internalization predominantly through clathrin-dependent endocytosis. Its function is as follows. Glycoprotein C and glycoprotein N interact with each other and are present at the surface of the virion. The spikes at the surface of the virion are formed by an N-terminal extension of glycoprotein C. Glycoprotein N and glycoprotein C are able to attach the virion to host cell receptors. This attachment induces virion internalization predominantly through clathrin-dependent endocytosis. Class II fusion protein that promotes fusion of viral membrane with host endosomal membrane after endocytosis of the virion. Exposure to potassium is necessary for the conformational change leading to fusion. The sequence is that of Envelopment polyprotein (GP) from Ixodes.